Consider the following 191-residue polypeptide: MSLIRPALVLFILLTLLTGGVYPLLTTSLGQWWFNSQANGSLIRLNGEVRGSGLIGQNYTAAGYFQGRPSATAETADNPMASGGSNLAASNPALDKAVSERVQALRAANPDADPRVPVELVTTSASGLDNNLTPAAALWQVPRVAKARQLSVEQVSQLVNQATQTPLLSFLGQPVVNILQLNMALDALKDK.

The helical transmembrane segment at Pro-6–Thr-26 threads the bilayer.

This sequence belongs to the KdpC family. In terms of assembly, the system is composed of three essential subunits: KdpA, KdpB and KdpC.

Its subcellular location is the cell inner membrane. Part of the high-affinity ATP-driven potassium transport (or Kdp) system, which catalyzes the hydrolysis of ATP coupled with the electrogenic transport of potassium into the cytoplasm. This subunit acts as a catalytic chaperone that increases the ATP-binding affinity of the ATP-hydrolyzing subunit KdpB by the formation of a transient KdpB/KdpC/ATP ternary complex. The chain is Potassium-transporting ATPase KdpC subunit from Klebsiella pneumoniae (strain 342).